Consider the following 572-residue polypeptide: Proline--tRNA ligase (572 aa).

It belongs to the class-II aminoacyl-tRNA synthetase family. ProS type 1 subfamily. Homodimer.

It localises to the cytoplasm. The enzyme catalyses tRNA(Pro) + L-proline + ATP = L-prolyl-tRNA(Pro) + AMP + diphosphate. Functionally, catalyzes the attachment of proline to tRNA(Pro) in a two-step reaction: proline is first activated by ATP to form Pro-AMP and then transferred to the acceptor end of tRNA(Pro). As ProRS can inadvertently accommodate and process non-cognate amino acids such as alanine and cysteine, to avoid such errors it has two additional distinct editing activities against alanine. One activity is designated as 'pretransfer' editing and involves the tRNA(Pro)-independent hydrolysis of activated Ala-AMP. The other activity is designated 'posttransfer' editing and involves deacylation of mischarged Ala-tRNA(Pro). The misacylated Cys-tRNA(Pro) is not edited by ProRS. The polypeptide is Proline--tRNA ligase (Escherichia coli O17:K52:H18 (strain UMN026 / ExPEC)).